The primary structure comprises 306 residues: Glutamyl-Q tRNA(Asp) synthetase (306 aa).

L-glutamate contacts are provided by residues 4-8 (RYAPS) and E40. The 'HIGH' region motif lies at 7 to 17 (PSPSGDLHFGN). The Zn(2+) site is built by C92, C94, Y113, and C117. Residues Y180 and R198 each coordinate L-glutamate. Residues 236–240 (RLAKR) carry the 'KMSKS' region motif. K239 contributes to the ATP binding site.

The protein belongs to the class-I aminoacyl-tRNA synthetase family. GluQ subfamily. It depends on Zn(2+) as a cofactor.

In terms of biological role, catalyzes the tRNA-independent activation of glutamate in presence of ATP and the subsequent transfer of glutamate onto a tRNA(Asp). Glutamate is transferred on the 2-amino-5-(4,5-dihydroxy-2-cyclopenten-1-yl) moiety of the queuosine in the wobble position of the QUC anticodon. This chain is Glutamyl-Q tRNA(Asp) synthetase, found in Corynebacterium efficiens (strain DSM 44549 / YS-314 / AJ 12310 / JCM 11189 / NBRC 100395).